Consider the following 292-residue polypeptide: Protein/nucleic acid deglycase HchA (292 aa).

The span at 1–12 (MSQDVNELSKQP) shows a compositional bias: polar residues. The disordered stretch occupies residues 1–23 (MSQDVNELSKQPTPDKAEDNAFF). Cys190 acts as the Nucleophile in catalysis.

Belongs to the peptidase C56 family. HchA subfamily.

Its subcellular location is the cytoplasm. It catalyses the reaction N(omega)-(1-hydroxy-2-oxopropyl)-L-arginyl-[protein] + H2O = lactate + L-arginyl-[protein] + H(+). The catalysed reaction is N(6)-(1-hydroxy-2-oxopropyl)-L-lysyl-[protein] + H2O = lactate + L-lysyl-[protein] + H(+). The enzyme catalyses S-(1-hydroxy-2-oxopropyl)-L-cysteinyl-[protein] + H2O = lactate + L-cysteinyl-[protein] + H(+). It carries out the reaction N(omega)-(1-hydroxy-2-oxoethyl)-L-arginyl-[protein] + H2O = L-arginyl-[protein] + glycolate + H(+). It catalyses the reaction N(6)-(1-hydroxy-2-oxoethyl)-L-lysyl-[protein] + H2O = glycolate + L-lysyl-[protein] + H(+). The catalysed reaction is S-(1-hydroxy-2-oxoethyl)-L-cysteinyl-[protein] + H2O = glycolate + L-cysteinyl-[protein] + H(+). The enzyme catalyses N(2)-(1-hydroxy-2-oxopropyl)-dGTP + H2O = lactate + dGTP + H(+). It carries out the reaction N(2)-(1-hydroxy-2-oxopropyl)-GTP + H2O = lactate + GTP + H(+). It catalyses the reaction N(2)-(1-hydroxy-2-oxopropyl)-GDP + H2O = lactate + GDP + H(+). The catalysed reaction is N(2)-(1-hydroxy-2-oxopropyl)-GMP + H2O = lactate + GMP + H(+). The enzyme catalyses N(2)-(1-hydroxy-2-oxoethyl)-dGTP + H2O = dGTP + glycolate + H(+). It carries out the reaction N(2)-(1-hydroxy-2-oxoethyl)-GTP + H2O = glycolate + GTP + H(+). It catalyses the reaction N(2)-(1-hydroxy-2-oxoethyl)-GDP + H2O = glycolate + GDP + H(+). The catalysed reaction is N(2)-(1-hydroxy-2-oxoethyl)-GMP + H2O = glycolate + GMP + H(+). The enzyme catalyses an N(2)-(1-hydroxy-2-oxopropyl)-guanosine in RNA + H2O = a guanosine in RNA + lactate + H(+). It carries out the reaction an N(2)-(1-hydroxy-2-oxopropyl)-2'-deoxyguanosine in DNA + H2O = a 2'-deoxyguanosine in DNA + lactate + H(+). It catalyses the reaction an N(2)-(1-hydroxy-2-oxoethyl)-guanosine in RNA + H2O = a guanosine in RNA + glycolate + H(+). The catalysed reaction is an N(2)-(1-hydroxy-2-oxoethyl)-2'-deoxyguanosine in DNA + H2O = a 2'-deoxyguanosine in DNA + glycolate + H(+). Functionally, protein and nucleotide deglycase that catalyzes the deglycation of the Maillard adducts formed between amino groups of proteins or nucleotides and reactive carbonyl groups of glyoxals. Thus, functions as a protein deglycase that repairs methylglyoxal- and glyoxal-glycated proteins, and releases repaired proteins and lactate or glycolate, respectively. Deglycates cysteine, arginine and lysine residues in proteins, and thus reactivates these proteins by reversing glycation by glyoxals. Acts on early glycation intermediates (hemithioacetals and aminocarbinols), preventing the formation of Schiff bases and advanced glycation endproducts (AGE). Also functions as a nucleotide deglycase able to repair glycated guanine in the free nucleotide pool (GTP, GDP, GMP, dGTP) and in DNA and RNA. Is thus involved in a major nucleotide repair system named guanine glycation repair (GG repair), dedicated to reversing methylglyoxal and glyoxal damage via nucleotide sanitization and direct nucleic acid repair. Plays an important role in protecting cells from carbonyl stress. In Staphylococcus aureus (strain MSSA476), this protein is Protein/nucleic acid deglycase HchA.